The primary structure comprises 986 residues: Isoleucine--tRNA ligase (986 aa).

Residues 534 to 538 carry the 'KMSKS' region motif; sequence EMHKS. K537 provides a ligand contact to ATP.

The protein belongs to the class-I aminoacyl-tRNA synthetase family. IleS type 2 subfamily. In terms of assembly, monomer. It depends on Zn(2+) as a cofactor.

It is found in the cytoplasm. It carries out the reaction tRNA(Ile) + L-isoleucine + ATP = L-isoleucyl-tRNA(Ile) + AMP + diphosphate. Catalyzes the attachment of isoleucine to tRNA(Ile). As IleRS can inadvertently accommodate and process structurally similar amino acids such as valine, to avoid such errors it has two additional distinct tRNA(Ile)-dependent editing activities. One activity is designated as 'pretransfer' editing and involves the hydrolysis of activated Val-AMP. The other activity is designated 'posttransfer' editing and involves deacylation of mischarged Val-tRNA(Ile). The protein is Isoleucine--tRNA ligase (ileS) of Saccharolobus solfataricus (strain ATCC 35092 / DSM 1617 / JCM 11322 / P2) (Sulfolobus solfataricus).